The primary structure comprises 222 residues: Charged multivesicular body protein 4b (222 aa).

Disordered stretches follow at residues M1–Q21 and G183–A222. Residues Q21 to Q182 adopt a coiled-coil conformation. A compositionally biased stretch (low complexity) spans P188–K200.

The protein belongs to the SNF7 family. As to quaternary structure, probable core component of the endosomal sorting required for transport complex III (ESCRT-III). ESCRT-III components are thought to multimerize to form a flat lattice on the perimeter membrane of the endosome.

The protein resides in the cytoplasm. It localises to the cytosol. Its subcellular location is the late endosome membrane. It is found in the midbody. Its function is as follows. Probable core component of the endosomal sorting required for transport complex III (ESCRT-III) which is involved in multivesicular bodies (MVBs) formation and sorting of endosomal cargo proteins into MVBs. MVBs contain intraluminal vesicles (ILVs) that are generated by invagination and scission from the limiting membrane of the endosome and mostly are delivered to lysosomes enabling degradation of membrane proteins, such as stimulated growth factor receptors, lysosomal enzymes and lipids. This is Charged multivesicular body protein 4b (chmp4b) from Xenopus tropicalis (Western clawed frog).